The chain runs to 273 residues: WIMGHMVNAIYQIDEFVNLGANSIETDVSFDDNANPEYTYHGIPCDCGRSCLKWENYNDFLKGLRSATTPGSSKYQSKLILVVFDLKTGSLYDNQASEAGKKLAKNLLKHYWNNGNNGGRAYIVLSIPDLNHYPLIKGFTDTLKQEGHPELLEKVGYDFSGNDAVGDVAKAYKKAGVSGHVWQSDGITNCLLRGLTRVKEAVANRDSGNGYINKVYYWTVDKRATTRDALDAGVDGVMTNYPDVIADVMNEAAYKNKVRLATYEDSPWVTFKK.

H5 is an active-site residue. Residues E25 and D27 each coordinate Mg(2+). Residue H41 is the Nucleophile of the active site. Disulfide bonds link C45/C51 and C47/C190. Residue D85 participates in Mg(2+) binding.

Belongs to the arthropod phospholipase D family. Class II subfamily. Mg(2+) serves as cofactor. In terms of tissue distribution, expressed by the venom gland.

It is found in the secreted. The enzyme catalyses an N-(acyl)-sphingosylphosphocholine = an N-(acyl)-sphingosyl-1,3-cyclic phosphate + choline. It carries out the reaction an N-(acyl)-sphingosylphosphoethanolamine = an N-(acyl)-sphingosyl-1,3-cyclic phosphate + ethanolamine. It catalyses the reaction a 1-acyl-sn-glycero-3-phosphocholine = a 1-acyl-sn-glycero-2,3-cyclic phosphate + choline. The catalysed reaction is a 1-acyl-sn-glycero-3-phosphoethanolamine = a 1-acyl-sn-glycero-2,3-cyclic phosphate + ethanolamine. Functionally, dermonecrotic toxins cleave the phosphodiester linkage between the phosphate and headgroup of certain phospholipids (sphingolipid and lysolipid substrates), forming an alcohol (often choline) and a cyclic phosphate. This toxin acts on sphingomyelin (SM). It may also act on ceramide phosphoethanolamine (CPE), lysophosphatidylcholine (LPC) and lysophosphatidylethanolamine (LPE), but not on lysophosphatidylserine (LPS), and lysophosphatidylglycerol (LPG). It acts by transphosphatidylation, releasing exclusively cyclic phosphate products as second products. Induces dermonecrosis, hemolysis, increased vascular permeability, edema, inflammatory response, and platelet aggregation. The chain is Dermonecrotic toxin LhSicTox-alphaIA2av from Loxosceles hirsuta (Recluse spider).